Reading from the N-terminus, the 443-residue chain is Tol-Pal system protein TolB (443 aa).

Positions 1–33 (MKIGIINTKIRTVFSAFACMIAASLVCTMPARA) are cleaved as a signal peptide.

Belongs to the TolB family. The Tol-Pal system is composed of five core proteins: the inner membrane proteins TolA, TolQ and TolR, the periplasmic protein TolB and the outer membrane protein Pal. They form a network linking the inner and outer membranes and the peptidoglycan layer.

Its subcellular location is the periplasm. In terms of biological role, part of the Tol-Pal system, which plays a role in outer membrane invagination during cell division and is important for maintaining outer membrane integrity. In Brucella anthropi (strain ATCC 49188 / DSM 6882 / CCUG 24695 / JCM 21032 / LMG 3331 / NBRC 15819 / NCTC 12168 / Alc 37) (Ochrobactrum anthropi), this protein is Tol-Pal system protein TolB.